Reading from the N-terminus, the 141-residue chain is Large ribosomal subunit protein uL16 (141 aa).

The tract at residues 1-21 (MLMPKRVKYRKQQRGHNRGMA) is disordered.

The protein belongs to the universal ribosomal protein uL16 family. In terms of assembly, part of the 50S ribosomal subunit.

Functionally, binds 23S rRNA and is also seen to make contacts with the A and possibly P site tRNAs. In Roseiflexus sp. (strain RS-1), this protein is Large ribosomal subunit protein uL16.